The chain runs to 287 residues: Efem/EfeO family lipoprotein (287 aa).

A signal peptide spans 1–17 (MKKLPTILLASSLLLAA). Cys18 carries the N-palmitoyl cysteine lipid modification. Residue Cys18 is the site of S-diacylglycerol cysteine attachment. A disordered region spans residues 20–50 (NNSHSDDNSNKDKQSQSSKGENKASLQKATK). A compositionally biased stretch (basic and acidic residues) spans 23-33 (HSDDNSNKDKQ).

This sequence belongs to the EfeM/EfeO family.

The protein resides in the cell membrane. This chain is Efem/EfeO family lipoprotein, found in Staphylococcus haemolyticus (strain JCSC1435).